The sequence spans 447 residues: Na(+)-translocating NADH-quinone reductase subunit A (447 aa).

The protein belongs to the NqrA family. Composed of six subunits; NqrA, NqrB, NqrC, NqrD, NqrE and NqrF.

It carries out the reaction a ubiquinone + n Na(+)(in) + NADH + H(+) = a ubiquinol + n Na(+)(out) + NAD(+). Its function is as follows. NQR complex catalyzes the reduction of ubiquinone-1 to ubiquinol by two successive reactions, coupled with the transport of Na(+) ions from the cytoplasm to the periplasm. NqrA to NqrE are probably involved in the second step, the conversion of ubisemiquinone to ubiquinol. This Klebsiella pneumoniae (strain 342) protein is Na(+)-translocating NADH-quinone reductase subunit A.